We begin with the raw amino-acid sequence, 394 residues long: Argininosuccinate synthase (394 aa).

ATP contacts are provided by residues 7-15 (AYSGGLDTS) and alanine 34. Tyrosine 85 and serine 90 together coordinate L-citrulline. Glycine 115 contributes to the ATP binding site. Threonine 117, asparagine 121, and aspartate 122 together coordinate L-aspartate. Residue asparagine 121 coordinates L-citrulline. L-citrulline-binding residues include arginine 125, serine 176, serine 185, glutamate 261, and tyrosine 273.

Belongs to the argininosuccinate synthase family. Type 1 subfamily. Homotetramer.

It localises to the cytoplasm. The catalysed reaction is L-citrulline + L-aspartate + ATP = 2-(N(omega)-L-arginino)succinate + AMP + diphosphate + H(+). It participates in amino-acid biosynthesis; L-arginine biosynthesis; L-arginine from L-ornithine and carbamoyl phosphate: step 2/3. This Ehrlichia ruminantium (strain Welgevonden) protein is Argininosuccinate synthase.